The primary structure comprises 179 residues: Large ribosomal subunit protein uL5 (179 aa).

It belongs to the universal ribosomal protein uL5 family. Part of the 50S ribosomal subunit; part of the 5S rRNA/L5/L18/L25 subcomplex. Contacts the 5S rRNA and the P site tRNA. Forms a bridge to the 30S subunit in the 70S ribosome.

Its function is as follows. This is one of the proteins that bind and probably mediate the attachment of the 5S RNA into the large ribosomal subunit, where it forms part of the central protuberance. In the 70S ribosome it contacts protein S13 of the 30S subunit (bridge B1b), connecting the 2 subunits; this bridge is implicated in subunit movement. Contacts the P site tRNA; the 5S rRNA and some of its associated proteins might help stabilize positioning of ribosome-bound tRNAs. In Stutzerimonas stutzeri (strain A1501) (Pseudomonas stutzeri), this protein is Large ribosomal subunit protein uL5.